A 101-amino-acid chain; its full sequence is Small ribosomal subunit protein uS14 (101 aa).

This sequence belongs to the universal ribosomal protein uS14 family. In terms of assembly, part of the 30S ribosomal subunit. Contacts proteins S3 and S10.

Its function is as follows. Binds 16S rRNA, required for the assembly of 30S particles and may also be responsible for determining the conformation of the 16S rRNA at the A site. The chain is Small ribosomal subunit protein uS14 from Neisseria meningitidis serogroup C / serotype 2a (strain ATCC 700532 / DSM 15464 / FAM18).